Reading from the N-terminus, the 257-residue chain is Glutamate racemase (257 aa).

Substrate is bound by residues 12-13 (DS) and 44-45 (YG). The Proton donor/acceptor role is filled by Cys-75. A substrate-binding site is contributed by 76–77 (NT). The active-site Proton donor/acceptor is the Cys-186. 187–188 (TH) is a substrate binding site.

It belongs to the aspartate/glutamate racemases family.

It catalyses the reaction L-glutamate = D-glutamate. It functions in the pathway cell wall biogenesis; peptidoglycan biosynthesis. Provides the (R)-glutamate required for cell wall biosynthesis. In Clostridium kluyveri (strain NBRC 12016), this protein is Glutamate racemase.